Reading from the N-terminus, the 195-residue chain is Adenylate kinase (195 aa).

10 to 15 (GSGKGT) provides a ligand contact to ATP. The tract at residues 30-59 (STGDILRAERAAGTLLGQQAQSYMDRGELV) is NMP. AMP contacts are provided by residues Thr-31, Arg-36, 57-59 (ELV), 85-88 (GFPR), and Gln-92. The interval 126–140 (NRAKQAVNGQQRSDD) is LID. ATP is bound at residue Arg-127. 2 residues coordinate AMP: Arg-137 and Arg-148. Arg-176 lines the ATP pocket.

Belongs to the adenylate kinase family. Monomer.

It localises to the cytoplasm. It catalyses the reaction AMP + ATP = 2 ADP. It functions in the pathway purine metabolism; AMP biosynthesis via salvage pathway; AMP from ADP: step 1/1. Its function is as follows. Catalyzes the reversible transfer of the terminal phosphate group between ATP and AMP. Plays an important role in cellular energy homeostasis and in adenine nucleotide metabolism. The chain is Adenylate kinase from Thermosynechococcus vestitus (strain NIES-2133 / IAM M-273 / BP-1).